The following is a 150-amino-acid chain: Large ribosomal subunit protein bL9 (150 aa).

It belongs to the bacterial ribosomal protein bL9 family.

In terms of biological role, binds to the 23S rRNA. The protein is Large ribosomal subunit protein bL9 of Streptococcus pneumoniae (strain CGSP14).